A 62-amino-acid polypeptide reads, in one-letter code: Large ribosomal subunit protein uL29 (62 aa).

The protein belongs to the universal ribosomal protein uL29 family.

The chain is Large ribosomal subunit protein uL29 from Ruthia magnifica subsp. Calyptogena magnifica.